We begin with the raw amino-acid sequence, 337 residues long: Eukaryotic translation initiation factor 3 subunit H (337 aa).

The MPN domain occupies 21-153 (VQCDGLAVMK…LKAYRLTPQA (133 aa)).

Belongs to the eIF-3 subunit H family. As to quaternary structure, component of the eukaryotic translation initiation factor 3 (eIF-3) complex. The eIF-3 complex interacts with pix. Interacts with mxt.

It localises to the cytoplasm. Component of the eukaryotic translation initiation factor 3 (eIF-3) complex, which is involved in protein synthesis of a specialized repertoire of mRNAs and, together with other initiation factors, stimulates binding of mRNA and methionyl-tRNAi to the 40S ribosome. The eIF-3 complex specifically targets and initiates translation of a subset of mRNAs involved in cell proliferation. This chain is Eukaryotic translation initiation factor 3 subunit H, found in Drosophila grimshawi (Hawaiian fruit fly).